Here is a 423-residue protein sequence, read N- to C-terminus: MRSPQALLQGDPEIAGLINKELERQQSHLELIASENFASPAVMAAQGSVLTNKYAEGLPNRRYYGGCEHVDAIEELAIERAKQLFGAAWANVQPHSGAQANFAVFLALLKPGDTILGMDLSHGGHLTHGSPVNVSGKWFKAVHYGVDPETQQLNLESIRQLALEHKPKLIVCGYSAYPRSIDFAGFRAIADEVGAYLLADMAHIAGLVAAGVHPSPVPHCHVVTTTTHKTLRGPRGGLILCNDADFAKQFDKAVFPGTQGGPLEHVVAAKAVAFGEALQPSFKQYSQQVVANAQALAERLQERGIAVVSGGTDNHVVLLDLRGIGMTGKVADLLVSEVNITANKNTVPFDPESPFVTSGLRLGTAALTTRGFDEAAFSEVADVIADRLLNPEDAAIEQRCRDRVASLCQRHPLYGPASPVLAA.

(6S)-5,6,7,8-tetrahydrofolate is bound by residues leucine 120 and 124 to 126 (GHL). The residue at position 229 (lysine 229) is an N6-(pyridoxal phosphate)lysine. (6S)-5,6,7,8-tetrahydrofolate is bound at residue 353–355 (SPF).

Belongs to the SHMT family. As to quaternary structure, homodimer. Pyridoxal 5'-phosphate serves as cofactor.

The protein localises to the cytoplasm. It carries out the reaction (6R)-5,10-methylene-5,6,7,8-tetrahydrofolate + glycine + H2O = (6S)-5,6,7,8-tetrahydrofolate + L-serine. It participates in one-carbon metabolism; tetrahydrofolate interconversion. It functions in the pathway amino-acid biosynthesis; glycine biosynthesis; glycine from L-serine: step 1/1. Catalyzes the reversible interconversion of serine and glycine with tetrahydrofolate (THF) serving as the one-carbon carrier. This reaction serves as the major source of one-carbon groups required for the biosynthesis of purines, thymidylate, methionine, and other important biomolecules. Also exhibits THF-independent aldolase activity toward beta-hydroxyamino acids, producing glycine and aldehydes, via a retro-aldol mechanism. The protein is Serine hydroxymethyltransferase of Synechococcus sp. (strain RCC307).